The chain runs to 402 residues: Succinyl-CoA--D-citramalate CoA-transferase (402 aa).

The Nucleophile role is filled by D174.

The protein belongs to the CoA-transferase III family. Homodimer.

The enzyme catalyses (3R)-citramalate + succinyl-CoA = (3R)-citramalyl-CoA + succinate. The catalysed reaction is (R)-malate + succinyl-CoA = (R)-malyl-CoA + succinate. Its function is as follows. Involved in the 3-hydroxypropionate cycle used for autotrophic carbon dioxide fixation, and in the glyoxylate assimilation cycle used to regenerate acetyl-CoA and produce pyruvate as universal precursor for biosynthesis. Catalyzes the transfer of CoA moiety from succinyl-CoA to D-citramalate to yield citramalyl-CoA. The protein is Succinyl-CoA--D-citramalate CoA-transferase of Chloroflexus aurantiacus (strain ATCC 29366 / DSM 635 / J-10-fl).